The chain runs to 426 residues: Serine--tRNA ligase (426 aa).

An L-serine-binding site is contributed by 233-235; it reads TAE. 264-266 contacts ATP; it reads RAE. Glu-287 contributes to the L-serine binding site. ATP is bound at residue 351 to 354; sequence EISS. Ser-387 contacts L-serine.

It belongs to the class-II aminoacyl-tRNA synthetase family. Type-1 seryl-tRNA synthetase subfamily. Homodimer. The tRNA molecule binds across the dimer.

It is found in the cytoplasm. The enzyme catalyses tRNA(Ser) + L-serine + ATP = L-seryl-tRNA(Ser) + AMP + diphosphate + H(+). It catalyses the reaction tRNA(Sec) + L-serine + ATP = L-seryl-tRNA(Sec) + AMP + diphosphate + H(+). The protein operates within aminoacyl-tRNA biosynthesis; selenocysteinyl-tRNA(Sec) biosynthesis; L-seryl-tRNA(Sec) from L-serine and tRNA(Sec): step 1/1. Catalyzes the attachment of serine to tRNA(Ser). Is also able to aminoacylate tRNA(Sec) with serine, to form the misacylated tRNA L-seryl-tRNA(Sec), which will be further converted into selenocysteinyl-tRNA(Sec). This chain is Serine--tRNA ligase, found in Clostridium kluyveri (strain NBRC 12016).